A 706-amino-acid chain; its full sequence is Elongation factor G (706 aa).

Positions 12–288 (EKTRNIGIMA…GVTNYLPSPN (277 aa)) constitute a tr-type G domain. GTP contacts are provided by residues 21–28 (AHIDAGKT), 85–89 (DTPGH), and 139–142 (NKMD). A disordered region spans residues 288–309 (NDVPAITGHHPQDKEEDITRHP). The segment covering 297 to 309 (HPQDKEEDITRHP) has biased composition (basic and acidic residues).

It belongs to the TRAFAC class translation factor GTPase superfamily. Classic translation factor GTPase family. EF-G/EF-2 subfamily.

It localises to the cytoplasm. Its function is as follows. Catalyzes the GTP-dependent ribosomal translocation step during translation elongation. During this step, the ribosome changes from the pre-translocational (PRE) to the post-translocational (POST) state as the newly formed A-site-bound peptidyl-tRNA and P-site-bound deacylated tRNA move to the P and E sites, respectively. Catalyzes the coordinated movement of the two tRNA molecules, the mRNA and conformational changes in the ribosome. This Salinibacter ruber (strain DSM 13855 / M31) protein is Elongation factor G.